The following is a 147-amino-acid chain: Large ribosomal subunit protein bL9 (147 aa).

The protein belongs to the bacterial ribosomal protein bL9 family.

Functionally, binds to the 23S rRNA. The polypeptide is Large ribosomal subunit protein bL9 (Mycoplasmoides gallisepticum (strain R(low / passage 15 / clone 2)) (Mycoplasma gallisepticum)).